The chain runs to 213 residues: Imidazole glycerol phosphate synthase subunit HisH 1 (213 aa).

The Glutamine amidotransferase type-1 domain occupies 4–213 (TVAVIDYGMG…QNFVAWDGRW (210 aa)). C82 serves as the catalytic Nucleophile. Catalysis depends on residues H191 and E193.

Heterodimer of HisH and HisF.

Its subcellular location is the cytoplasm. It carries out the reaction 5-[(5-phospho-1-deoxy-D-ribulos-1-ylimino)methylamino]-1-(5-phospho-beta-D-ribosyl)imidazole-4-carboxamide + L-glutamine = D-erythro-1-(imidazol-4-yl)glycerol 3-phosphate + 5-amino-1-(5-phospho-beta-D-ribosyl)imidazole-4-carboxamide + L-glutamate + H(+). It catalyses the reaction L-glutamine + H2O = L-glutamate + NH4(+). It participates in amino-acid biosynthesis; L-histidine biosynthesis; L-histidine from 5-phospho-alpha-D-ribose 1-diphosphate: step 5/9. IGPS catalyzes the conversion of PRFAR and glutamine to IGP, AICAR and glutamate. The HisH subunit provides the glutamine amidotransferase activity that produces the ammonia necessary to HisF for the synthesis of IGP and AICAR. The chain is Imidazole glycerol phosphate synthase subunit HisH 1 (hisH1) from Pseudomonas aeruginosa (strain ATCC 15692 / DSM 22644 / CIP 104116 / JCM 14847 / LMG 12228 / 1C / PRS 101 / PAO1).